The following is a 632-amino-acid chain: Asparagine synthetase [glutamine-hydrolyzing] 1 (632 aa).

Catalysis depends on Cys2, which acts as the For GATase activity. The 213-residue stretch at 2 to 214 folds into the Glutamine amidotransferase type-2 domain; the sequence is CGFVGVFNKH…PGSQFTIRPD (213 aa). L-glutamine is bound by residues 52–56, 77–79, and Asp102; these read RLSII and NGE. ATP contacts are provided by residues Val288 and 361–362; that span reads SG.

This sequence belongs to the asparagine synthetase family.

The catalysed reaction is L-aspartate + L-glutamine + ATP + H2O = L-asparagine + L-glutamate + AMP + diphosphate + H(+). It participates in amino-acid biosynthesis; L-asparagine biosynthesis; L-asparagine from L-aspartate (L-Gln route): step 1/1. Its function is as follows. Main asparagine synthetase in vegetative cells. The chain is Asparagine synthetase [glutamine-hydrolyzing] 1 (asnB) from Bacillus subtilis (strain 168).